Reading from the N-terminus, the 464-residue chain is ATP synthase subunit beta (464 aa).

151 to 158 (GGAGVGKT) provides a ligand contact to ATP.

This sequence belongs to the ATPase alpha/beta chains family. As to quaternary structure, F-type ATPases have 2 components, CF(1) - the catalytic core - and CF(0) - the membrane proton channel. CF(1) has five subunits: alpha(3), beta(3), gamma(1), delta(1), epsilon(1). CF(0) has three main subunits: a(1), b(2) and c(9-12). The alpha and beta chains form an alternating ring which encloses part of the gamma chain. CF(1) is attached to CF(0) by a central stalk formed by the gamma and epsilon chains, while a peripheral stalk is formed by the delta and b chains.

Its subcellular location is the cell membrane. It carries out the reaction ATP + H2O + 4 H(+)(in) = ADP + phosphate + 5 H(+)(out). Produces ATP from ADP in the presence of a proton gradient across the membrane. The catalytic sites are hosted primarily by the beta subunits. The protein is ATP synthase subunit beta of Clostridium kluyveri (strain ATCC 8527 / DSM 555 / NBRC 12016 / NCIMB 10680 / K1).